A 38-amino-acid chain; its full sequence is Large ribosomal subunit protein bL36 (38 aa).

The protein belongs to the bacterial ribosomal protein bL36 family.

This chain is Large ribosomal subunit protein bL36, found in Mycoplasma mobile (strain ATCC 43663 / 163K / NCTC 11711) (Mesomycoplasma mobile).